A 300-amino-acid chain; its full sequence is MSSAAVSKYVNDMWPGSPQEKASPSTSGSGRSSRLSSRSRSRSSSRSSRPHSRSSSRSSSRSHSRPRRSRRSRSRSRSRRRHQRKYRRYSRSYSRSRSRSRGHRYYRDSRYEQPRRYYQSPSPYRSRSRSRSRGRSHHRRSYYAITRGRRYYGFGRTVYPEDRPRWRERSRTRSRSRSRTPFRLSEKDRMELLEIAKANAAKALGTANFDLPASLRAKEASQGAVSCSGPKTEHSEKQTEVGTKNASEKSAAAQRNIAFSSNNSVAKPLEKTTKAAVEETSSGSPKIDKKKSPYGLWIPV.

The interval 1 to 142 (MSSAAVSKYV…RGRSHHRRSY (142 aa)) is disordered. Position 17 is a phosphoserine (Ser17). Residues 23–36 (SPSTSGSGRSSRLS) are compositionally biased toward low complexity. The span at 37–104 (SRSRSRSSSR…RSRSRSRGHR (68 aa)) shows a compositional bias: basic residues. Residues 105 to 115 (YYRDSRYEQPR) are compositionally biased toward basic and acidic residues. Low complexity predominate over residues 116 to 125 (RYYQSPSPYR). Residues Ser120 and Ser122 each carry the phosphoserine modification. Residues 126–141 (SRSRSRSRGRSHHRRS) show a composition bias toward basic residues. At Arg147 the chain carries Omega-N-methylarginine. Residues 222-300 (QGAVSCSGPK…KSPYGLWIPV (79 aa)) are disordered. The span at 268–277 (PLEKTTKAAV) shows a compositional bias: basic and acidic residues. Position 284 is a phosphoserine (Ser284).

The protein belongs to the RSRP family. In terms of processing, phosphorylated. Phosphorylation at Ser-120 and Ser-122 mediates the interaction with spliceosome proteins.

It is found in the nucleus. In terms of biological role, probably acts as a spliceosomal factor that contributes to spliceosome assembly and regulates the isoform switching of proteins such as PARP6. The chain is Arginine/serine-rich protein 1 (Rsrp1) from Rattus norvegicus (Rat).